A 114-amino-acid polypeptide reads, in one-letter code: Nucleoid-associated protein CKL_3826 (114 aa).

The protein belongs to the YbaB/EbfC family. Homodimer.

It is found in the cytoplasm. It localises to the nucleoid. In terms of biological role, binds to DNA and alters its conformation. May be involved in regulation of gene expression, nucleoid organization and DNA protection. This Clostridium kluyveri (strain ATCC 8527 / DSM 555 / NBRC 12016 / NCIMB 10680 / K1) protein is Nucleoid-associated protein CKL_3826.